We begin with the raw amino-acid sequence, 1072 residues long: Vacuolar membrane protease (1072 aa).

At 1 to 9 (MINPISFRP) the chain is on the cytoplasmic side. The helical transmembrane segment at 10–30 (GPVTFWTTLIYLALLIPIVII) threads the bilayer. Over 31–404 (NEKTPAAPKT…SFVLFGLRGM (374 aa)) the chain is Vacuolar. N-linked (GlcNAc...) asparagine glycans are attached at residues N48, N116, N119, and N128. H185 and D197 together coordinate Zn(2+). E231 (proton acceptor) is an active-site residue. Zn(2+)-binding residues include E232, E257, and H330. Residues 405–425 (FAWSLTLLIATPLVLVGITWL) traverse the membrane as a helical segment. The Cytoplasmic segment spans residues 426–457 (LRNLDKDYFFTSTVKTKEHPEYEAVPIGGWKG). Residues 458 to 478 (FFRFPFALGVAVFFTISSALL) traverse the membrane as a helical segment. Residues 479–492 (MNKVNPLIVYSSRY) are Vacuolar-facing. A helical transmembrane segment spans residues 493–513 (SVWVMMVSIFYFSFWMIMRGA). Residues 514–523 (NFVRPSALHR) lie on the Cytoplasmic side of the membrane. Residues 524–544 (GYANLWLFVFGWIVLVAVTAL) form a helical membrane-spanning segment. The Vacuolar portion of the chain corresponds to 545–554 (EDRRRIAAGY). A helical transmembrane segment spans residues 555–575 (IFVFLESAIFLSCLISFVELL). Residues 576 to 747 (AVPRKSSYAL…YDHEQEWSGH (172 aa)) lie on the Cytoplasmic side of the membrane. The tract at residues 593-713 (GQEHDHNGYQ…GTNDRGRTTF (121 aa)) is disordered. Positions 606–617 (DSTDEPSLRARA) are enriched in basic and acidic residues. Over residues 643–661 (GTTNGLSTAPSVAAHSSQP) the composition is skewed to polar residues. The chain crosses the membrane as a helical span at residues 748–768 (LPSWAWFFQFLLLGPFMIILA). Residues 769–789 (AQTGLMLTDAVYQTGSDGSKL) are Vacuolar-facing. A helical membrane pass occupies residues 790 to 810 (ITPYLIIFVFTVLLILPLTPF). Topologically, residues 811–817 (IHRVTHH) are cytoplasmic. The chain crosses the membrane as a helical span at residues 818 to 838 (IPVFLLVVFIVTLTYNLIAFP). Over 839–1072 (FSANNRYKTF…VEGRKAFKIV (234 aa)) the chain is Vacuolar. N-linked (GlcNAc...) asparagine glycosylation is found at N932 and N974.

Belongs to the peptidase M28 family. Requires Zn(2+) as cofactor.

Its subcellular location is the vacuole membrane. In terms of biological role, may be involved in vacuolar sorting and osmoregulation. The sequence is that of Vacuolar membrane protease from Neurospora crassa (strain ATCC 24698 / 74-OR23-1A / CBS 708.71 / DSM 1257 / FGSC 987).